A 143-amino-acid polypeptide reads, in one-letter code: Flagellar assembly factor FliW (143 aa).

The protein belongs to the FliW family. Interacts with translational regulator CsrA and flagellin(s).

Its subcellular location is the cytoplasm. Its function is as follows. Acts as an anti-CsrA protein, binds CsrA and prevents it from repressing translation of its target genes, one of which is flagellin. Binds to flagellin and participates in the assembly of the flagellum. This is Flagellar assembly factor FliW from Clostridium novyi (strain NT).